The chain runs to 428 residues: Enolase (428 aa).

Glutamine 163 serves as a coordination point for (2R)-2-phosphoglycerate. The Proton donor role is filled by glutamate 205. Residues aspartate 243, glutamate 286, and aspartate 313 each contribute to the Mg(2+) site. (2R)-2-phosphoglycerate is bound by residues lysine 338, arginine 367, serine 368, and lysine 389. Lysine 338 (proton acceptor) is an active-site residue.

This sequence belongs to the enolase family. Mg(2+) is required as a cofactor.

Its subcellular location is the cytoplasm. It is found in the secreted. It localises to the cell surface. The enzyme catalyses (2R)-2-phosphoglycerate = phosphoenolpyruvate + H2O. Its pathway is carbohydrate degradation; glycolysis; pyruvate from D-glyceraldehyde 3-phosphate: step 4/5. In terms of biological role, catalyzes the reversible conversion of 2-phosphoglycerate (2-PG) into phosphoenolpyruvate (PEP). It is essential for the degradation of carbohydrates via glycolysis. This chain is Enolase, found in Polaromonas naphthalenivorans (strain CJ2).